Here is a 900-residue protein sequence, read N- to C-terminus: Bifunctional uridylyltransferase/uridylyl-removing enzyme (900 aa).

Positions 1-342 (MPQVDPELFD…PCEQPVQIQP (342 aa)) are uridylyltransferase. Positions 343 to 705 (LNSRFQLRDG…TTQREFESGS (363 aa)) are uridylyl-removing. One can recognise an HD domain in the interval 461 to 583 (VDAHTLNLIK…VGDQTHLDYL (123 aa)). 2 ACT domains span residues 706–789 (QIFI…IIQR) and 816–891 (VLEV…DNGR).

The protein belongs to the GlnD family. The cofactor is Mg(2+).

It carries out the reaction [protein-PII]-L-tyrosine + UTP = [protein-PII]-uridylyl-L-tyrosine + diphosphate. It catalyses the reaction [protein-PII]-uridylyl-L-tyrosine + H2O = [protein-PII]-L-tyrosine + UMP + H(+). Its activity is regulated as follows. Uridylyltransferase (UTase) activity is inhibited by glutamine, while glutamine activates uridylyl-removing (UR) activity. Modifies, by uridylylation and deuridylylation, the PII regulatory proteins (GlnB and homologs), in response to the nitrogen status of the cell that GlnD senses through the glutamine level. Under low glutamine levels, catalyzes the conversion of the PII proteins and UTP to PII-UMP and PPi, while under higher glutamine levels, GlnD hydrolyzes PII-UMP to PII and UMP (deuridylylation). Thus, controls uridylylation state and activity of the PII proteins, and plays an important role in the regulation of nitrogen assimilation and metabolism. In Pseudomonas aeruginosa (strain LESB58), this protein is Bifunctional uridylyltransferase/uridylyl-removing enzyme.